We begin with the raw amino-acid sequence, 628 residues long: Cytoplasmic dynein 1 intermediate chain 1 (628 aa).

Basic and acidic residues-rich tracts occupy residues 1-13 (MSDKSDLKAELER) and 20-60 (QIRE…RETE). The segment at 1 to 114 (MSDKSDLKAE…RTLQWDTDPS (114 aa)) is disordered. S2 carries the N-acetylserine modification. S50 bears the Phosphoserine mark. The segment covering 70–79 (PEPPLVPTPM) has biased composition (pro residues). The segment covering 80 to 90 (SPSSKSVSTPS) has biased composition (low complexity). S83 bears the Phosphoserine mark. The residue at position 88 (T88) is a Phosphothreonine. 3 positions are modified to phosphoserine: S90, S94, and S97. Polar residues predominate over residues 105–114 (RTLQWDTDPS). The interval 130–146 (KLGVSKVTQVDFLPREV) is interaction with DYNLT1. The interval 152-204 (ETQTPLATHQSEEDEEDEEMVEPKIGHDSELENQEKKQETKEAPPRELTEEEK) is disordered. T159 is subject to Phosphothreonine. 2 positions are modified to phosphoserine: S162 and S180. Over residues 172–204 (VEPKIGHDSELENQEKKQETKEAPPRELTEEEK) the composition is skewed to basic and acidic residues. 7 WD repeats span residues 268 to 317 (SKHR…TTPE), 321 to 361 (HCQS…RTPV), 370 to 411 (AHTH…TPQE), 420 to 460 (SKPV…AGIG), 465 to 510 (GHQG…PLYS), 513 to 553 (DNAD…EVPT), and 559 to 598 (EGASALNRVRWAQGGKEVAVGDSEGRIWIYDVGELAVPHN). S618 is subject to Phosphoserine.

It belongs to the dynein intermediate chain family. Homodimer. The cytoplasmic dynein 1 complex consists of two catalytic heavy chains (HCs) and a number of non-catalytic subunits presented by intermediate chains (ICs), light intermediate chains (LICs) and light chains (LCs); the composition seems to vary in respect to the IC, LIC and LC composition. The heavy chain homodimer serves as a scaffold for the probable homodimeric assembly of the respective non-catalytic subunits. The ICs and LICs bind directly to the HC dimer and the LCs assemble on the IC dimer. Interacts with DYNC1H1. Interacts with DYNLT1 and DYNLT3. Interacts with DCTN1. Interacts with DYNLL2. Interacts with MCRS1; the interaction is required for the proper distribution of centriolar satellites.

It is found in the cytoplasm. Its subcellular location is the chromosome. The protein resides in the centromere. It localises to the kinetochore. The protein localises to the cytoskeleton. It is found in the spindle pole. Acts as one of several non-catalytic accessory components of the cytoplasmic dynein 1 complex that are thought to be involved in linking dynein to cargos and to adapter proteins that regulate dynein function. Cytoplasmic dynein 1 acts as a motor for the intracellular retrograde motility of vesicles and organelles along microtubules. The intermediate chains mediate the binding of dynein to dynactin via its 150 kDa component (p150-glued) DCTN1. May play a role in mediating the interaction of cytoplasmic dynein with membranous organelles and kinetochores. In Mus musculus (Mouse), this protein is Cytoplasmic dynein 1 intermediate chain 1 (Dync1i1).